A 20-amino-acid chain; its full sequence is Protein PR-L5 (20 aa).

It belongs to the BetVI family.

The chain is Protein PR-L5 from Lupinus luteus (European yellow lupine).